The following is a 530-amino-acid chain: 2,3-bisphosphoglycerate-independent phosphoglycerate mutase (530 aa).

2 residues coordinate Mn(2+): Asp-15 and Ser-65. Ser-65 acts as the Phosphoserine intermediate in catalysis. Substrate is bound by residues His-126, 155–156, Arg-187, Arg-193, 257–260, and Lys-330; these read RD and RPDR. The Mn(2+) site is built by Asp-397, His-401, Asp-438, His-439, and His-456.

It belongs to the BPG-independent phosphoglycerate mutase family. In terms of assembly, monomer. Mn(2+) is required as a cofactor.

It carries out the reaction (2R)-2-phosphoglycerate = (2R)-3-phosphoglycerate. The protein operates within carbohydrate degradation; glycolysis; pyruvate from D-glyceraldehyde 3-phosphate: step 3/5. Functionally, catalyzes the interconversion of 2-phosphoglycerate and 3-phosphoglycerate. This chain is 2,3-bisphosphoglycerate-independent phosphoglycerate mutase, found in Synechococcus sp. (strain JA-3-3Ab) (Cyanobacteria bacterium Yellowstone A-Prime).